Here is a 132-residue protein sequence, read N- to C-terminus: Ribosome-binding factor A (132 aa).

The protein belongs to the RbfA family. In terms of assembly, monomer. Binds 30S ribosomal subunits, but not 50S ribosomal subunits or 70S ribosomes.

It is found in the cytoplasm. Functionally, one of several proteins that assist in the late maturation steps of the functional core of the 30S ribosomal subunit. Associates with free 30S ribosomal subunits (but not with 30S subunits that are part of 70S ribosomes or polysomes). Required for efficient processing of 16S rRNA. May interact with the 5'-terminal helix region of 16S rRNA. In Burkholderia lata (strain ATCC 17760 / DSM 23089 / LMG 22485 / NCIMB 9086 / R18194 / 383), this protein is Ribosome-binding factor A.